The primary structure comprises 645 residues: DNA mismatch repair protein MutL (645 aa).

The protein belongs to the DNA mismatch repair MutL/HexB family.

This protein is involved in the repair of mismatches in DNA. It is required for dam-dependent methyl-directed DNA mismatch repair. May act as a 'molecular matchmaker', a protein that promotes the formation of a stable complex between two or more DNA-binding proteins in an ATP-dependent manner without itself being part of a final effector complex. In Geobacillus thermodenitrificans (strain NG80-2), this protein is DNA mismatch repair protein MutL.